The chain runs to 65 residues: Large ribosomal subunit protein bL35 (65 aa).

This sequence belongs to the bacterial ribosomal protein bL35 family.

This is Large ribosomal subunit protein bL35 from Thermus thermophilus (strain ATCC BAA-163 / DSM 7039 / HB27).